The sequence spans 367 residues: DNA replication and repair protein RecF (367 aa).

Position 30 to 37 (30 to 37 (GANGSGKT)) interacts with ATP.

Belongs to the RecF family.

It is found in the cytoplasm. The RecF protein is involved in DNA metabolism; it is required for DNA replication and normal SOS inducibility. RecF binds preferentially to single-stranded, linear DNA. It also seems to bind ATP. The chain is DNA replication and repair protein RecF from Pseudomonas savastanoi pv. phaseolicola (strain 1448A / Race 6) (Pseudomonas syringae pv. phaseolicola (strain 1448A / Race 6)).